A 140-amino-acid chain; its full sequence is MLQPKRTKYRKVQKGRVKGLAHRGSSLAFGTFGIKALEAIWLTARQIEAARIAMTRAMKRQGQVWIRVFPDKPITKKPAEVRMGKGKGSPEYWAAVVKPGKILFEIEGVDINLAREATRLAIHKLPIKAKFVVHKDYINA.

This sequence belongs to the universal ribosomal protein uL16 family. In terms of assembly, part of the 50S ribosomal subunit.

Binds 23S rRNA and is also seen to make contacts with the A and possibly P site tRNAs. In Amoebophilus asiaticus (strain 5a2), this protein is Large ribosomal subunit protein uL16.